Here is a 933-residue protein sequence, read N- to C-terminus: 2-oxoglutarate dehydrogenase E1 component (933 aa).

This sequence belongs to the alpha-ketoglutarate dehydrogenase family. Homodimer. Part of the 2-oxoglutarate dehydrogenase (OGDH) complex composed of E1 (2-oxoglutarate dehydrogenase), E2 (dihydrolipoamide succinyltransferase) and E3 (dihydrolipoamide dehydrogenase); the complex contains multiple copies of the three enzymatic components (E1, E2 and E3). Interacts (via N-terminus) with SucB, the E2 component of OGDH complex. Thiamine diphosphate is required as a cofactor.

The catalysed reaction is N(6)-[(R)-lipoyl]-L-lysyl-[protein] + 2-oxoglutarate + H(+) = N(6)-[(R)-S(8)-succinyldihydrolipoyl]-L-lysyl-[protein] + CO2. E1 component of the 2-oxoglutarate dehydrogenase (OGDH) complex which catalyzes the decarboxylation of 2-oxoglutarate, the first step in the conversion of 2-oxoglutarate to succinyl-CoA and CO(2). The protein is 2-oxoglutarate dehydrogenase E1 component (sucA) of Escherichia coli O157:H7.